The sequence spans 70 residues: DNA-binding transcriptional activator AlpA (70 aa).

The segment at residues 12 to 31 is a DNA-binding region (H-T-H motif); that stretch reads LPAVIQKTGMARATIYDWLN.

In terms of biological role, positive regulator of the expression of the slpA gene. When overexpressed, leads to suppression of the capsule overproduction and UV sensitivity phenotypes of cells mutant for the Lon ATP-dependent protease. Part of the cryptic P4-like prophage CP4-57. Overexpression of AlpA leads to excision of the CP4-57 prophage by IntA. This inactivates ssrA (the gene upstream of the prophage) that encodes tmRNA which is required to rescue stalled ribosomes in a process known as trans-translation. The sequence is that of DNA-binding transcriptional activator AlpA from Escherichia coli (strain K12).